The following is a 355-amino-acid chain: tRNA N6-adenosine threonylcarbamoyltransferase (355 aa).

Fe cation-binding residues include His111 and His115. Residues 134–138, Asp167, Gly180, Asp184, and Asn279 contribute to the substrate site; that span reads LVSGG. Residue Asp307 participates in Fe cation binding.

This sequence belongs to the KAE1 / TsaD family. Fe(2+) serves as cofactor.

The protein resides in the cytoplasm. The catalysed reaction is L-threonylcarbamoyladenylate + adenosine(37) in tRNA = N(6)-L-threonylcarbamoyladenosine(37) in tRNA + AMP + H(+). In terms of biological role, required for the formation of a threonylcarbamoyl group on adenosine at position 37 (t(6)A37) in tRNAs that read codons beginning with adenine. Is involved in the transfer of the threonylcarbamoyl moiety of threonylcarbamoyl-AMP (TC-AMP) to the N6 group of A37, together with TsaE and TsaB. TsaD likely plays a direct catalytic role in this reaction. The sequence is that of tRNA N6-adenosine threonylcarbamoyltransferase from Picosynechococcus sp. (strain ATCC 27264 / PCC 7002 / PR-6) (Agmenellum quadruplicatum).